The chain runs to 26 residues: Coenzyme PQQ synthesis protein A (26 aa).

Residues 16–20 (EINSY) constitute a cross-link (pyrroloquinoline quinone (Glu-Tyr)).

Belongs to the PqqA family.

The protein operates within cofactor biosynthesis; pyrroloquinoline quinone biosynthesis. Functionally, required for coenzyme pyrroloquinoline quinone (PQQ) biosynthesis. PQQ is probably formed by cross-linking a specific glutamate to a specific tyrosine residue and excising these residues from the peptide. This is Coenzyme PQQ synthesis protein A from Gluconacetobacter diazotrophicus (strain ATCC 49037 / DSM 5601 / CCUG 37298 / CIP 103539 / LMG 7603 / PAl5).